Reading from the N-terminus, the 498-residue chain is Zinc finger protein 79 (498 aa).

Residues 1 to 23 (MLEEGVLPSPGPALPQEENTGEE) are disordered. The 72-residue stretch at 38–109 (TFFSSVTVAF…EGEDLRSPSP (72 aa)) folds into the KRAB domain. 11 C2H2-type zinc fingers span residues 193-215 (YACN…QKSH), 221-243 (YECS…QRIH), 249-271 (YKCS…QRTH), 277-299 (YRCS…QRIH), 305-327 (YECS…QRTH), 333-355 (YKCS…QRIH), 361-383 (YRCA…QRTH), 389-411 (YKCS…QKTH), 417-439 (YKCN…HIIH), 445-467 (YECN…QRIH), and 473-495 (YECS…QRLH).

This sequence belongs to the krueppel C2H2-type zinc-finger protein family.

It is found in the nucleus. In terms of biological role, may be involved in transcriptional regulation. The polypeptide is Zinc finger protein 79 (ZNF79) (Homo sapiens (Human)).